The primary structure comprises 61 residues: Photosystem II reaction center protein K (61 aa).

Positions 1–24 are excised as a propeptide; the sequence is MLNIFSLICICLNSALYSSNFFFA. Residues 40 to 60 form a helical membrane-spanning segment; sequence MPVIPLFFFLLAFVWQAAVSF.

The protein belongs to the PsbK family. As to quaternary structure, PSII is composed of 1 copy each of membrane proteins PsbA, PsbB, PsbC, PsbD, PsbE, PsbF, PsbH, PsbI, PsbJ, PsbK, PsbL, PsbM, PsbT, PsbX, PsbY, PsbZ, Psb30/Ycf12, at least 3 peripheral proteins of the oxygen-evolving complex and a large number of cofactors. It forms dimeric complexes.

The protein resides in the plastid. It localises to the chloroplast thylakoid membrane. In terms of biological role, one of the components of the core complex of photosystem II (PSII). PSII is a light-driven water:plastoquinone oxidoreductase that uses light energy to abstract electrons from H(2)O, generating O(2) and a proton gradient subsequently used for ATP formation. It consists of a core antenna complex that captures photons, and an electron transfer chain that converts photonic excitation into a charge separation. The protein is Photosystem II reaction center protein K of Vitis vinifera (Grape).